Here is a 249-residue protein sequence, read N- to C-terminus: Superoxide dismutase 1 copper chaperone (249 aa).

One can recognise an HMA domain in the interval 6–69; sequence TYEATYAIPM…TLRNCGKDAI (64 aa). Zn(2+) is bound at residue H16. Cu cation is bound by residues C17 and C20. The cysteines at positions 27 and 64 are disulfide-linked. Positions 229 and 231 each coordinate Cu cation.

This sequence belongs to the CCS1 family. Homodimer, and heterodimer with apo-SOD1. Zinc-binding at His-16 of CCS1 and 'Glu-43' of apo-SOD1 is required for this heterodimerization. Cu(2+) is required as a cofactor.

The protein resides in the cytoplasm. It localises to the mitochondrion intermembrane space. In terms of biological role, copper chaperone for apo superoxide dismutase 1 (SOD1). Binds copper ions and delivers them specifically to apo-SOD1. This Saccharomyces cerevisiae (strain ATCC 204508 / S288c) (Baker's yeast) protein is Superoxide dismutase 1 copper chaperone (CCS1).